We begin with the raw amino-acid sequence, 273 residues long: Dermonecrotic toxin LdSicTox-alphaIB1av (273 aa).

H5 is an active-site residue. Residues E25 and D27 each contribute to the Mg(2+) site. The Nucleophile role is filled by H41. 2 disulfides stabilise this stretch: C45-C51 and C47-C190. Residue D85 participates in Mg(2+) binding. N250 carries an N-linked (GlcNAc...) asparagine glycan.

Belongs to the arthropod phospholipase D family. Class II subfamily. Requires Mg(2+) as cofactor. Expressed by the venom gland.

It localises to the secreted. It catalyses the reaction an N-(acyl)-sphingosylphosphocholine = an N-(acyl)-sphingosyl-1,3-cyclic phosphate + choline. The enzyme catalyses an N-(acyl)-sphingosylphosphoethanolamine = an N-(acyl)-sphingosyl-1,3-cyclic phosphate + ethanolamine. It carries out the reaction a 1-acyl-sn-glycero-3-phosphocholine = a 1-acyl-sn-glycero-2,3-cyclic phosphate + choline. The catalysed reaction is a 1-acyl-sn-glycero-3-phosphoethanolamine = a 1-acyl-sn-glycero-2,3-cyclic phosphate + ethanolamine. Its function is as follows. Dermonecrotic toxins cleave the phosphodiester linkage between the phosphate and headgroup of certain phospholipids (sphingolipid and lysolipid substrates), forming an alcohol (often choline) and a cyclic phosphate. This toxin acts on sphingomyelin (SM). It may also act on ceramide phosphoethanolamine (CPE), lysophosphatidylcholine (LPC) and lysophosphatidylethanolamine (LPE), but not on lysophosphatidylserine (LPS), and lysophosphatidylglycerol (LPG). It acts by transphosphatidylation, releasing exclusively cyclic phosphate products as second products. Induces dermonecrosis, hemolysis, increased vascular permeability, edema, inflammatory response, and platelet aggregation. This chain is Dermonecrotic toxin LdSicTox-alphaIB1av, found in Loxosceles deserta (Desert recluse spider).